Consider the following 183-residue polypeptide: Ly6/PLAUR domain-containing protein 6B (183 aa).

The N-terminal stretch at Met1 to Ala39 is a signal peptide. The UPAR/Ly6 domain occupies Phe60–Ala151. The interval Phe60 to Ala154 is sufficient for inhibiting alpha-7 nAChR currents. 6 disulfides stabilise this stretch: Cys62–Cys90, Cys65–Cys74, Cys83–Cys109, Cys115–Cys134, Cys120–Cys131, and Cys135–Cys140. Ser164 carries GPI-anchor amidated serine lipidation. The propeptide at Ser165–Leu183 is removed in mature form.

The protein localises to the cell membrane. Its function is as follows. Likely acts as a modulator of nicotinic acetylcholine receptors (nAChRs) activity. In vitro acts on nAChRs in a subtype- and stoichiometry-dependent manner. Modulates specifically alpha-3(3):beta-4(2) nAChRs by enhancing the sensitivity to ACh, decreasing ACh-induced maximal current response and increasing the rate of desensitization to ACh; has no effect on alpha-7 homomeric nAChRs; modulates alpha-3(2):alpha-5:beta-4(2) nAChRs in the context of CHRNA5/alpha-5 variant Asn-398 but not its wild-type sequence. However, according to another report in vitro it can weakly inhibits alpha-7 nAChRs. The chain is Ly6/PLAUR domain-containing protein 6B (LYPD6B) from Homo sapiens (Human).